A 220-amino-acid polypeptide reads, in one-letter code: GTP cyclohydrolase 1 (220 aa).

Residues Cys110, His113, and Cys181 each contribute to the Zn(2+) site.

This sequence belongs to the GTP cyclohydrolase I family. As to quaternary structure, toroid-shaped homodecamer, composed of two pentamers of five dimers.

The enzyme catalyses GTP + H2O = 7,8-dihydroneopterin 3'-triphosphate + formate + H(+). The protein operates within cofactor biosynthesis; 7,8-dihydroneopterin triphosphate biosynthesis; 7,8-dihydroneopterin triphosphate from GTP: step 1/1. This Baumannia cicadellinicola subsp. Homalodisca coagulata protein is GTP cyclohydrolase 1.